We begin with the raw amino-acid sequence, 355 residues long: Diacylglycerol O-acyltransferase 2A (355 aa).

Helical transmembrane passes span 41-61 (LLWC…CSIP) and 62-78 (VLLW…ILVW). Asn-142 carries an N-linked (GlcNAc...) asparagine glycan.

It belongs to the diacylglycerol acyltransferase family.

It localises to the endoplasmic reticulum membrane. The catalysed reaction is an acyl-CoA + a 1,2-diacyl-sn-glycerol = a triacyl-sn-glycerol + CoA. The protein operates within glycerolipid metabolism; triacylglycerol biosynthesis. Catalyzes the terminal and only committed step in triacylglycerol synthesis by using diacylglycerol and fatty acyl CoA as substrates. Required for storage lipid synthesis. The protein is Diacylglycerol O-acyltransferase 2A (DGAT2A) of Umbelopsis ramanniana (Oleaginous fungus).